Here is a 63-residue protein sequence, read N- to C-terminus: Large ribosomal subunit protein bL35 (63 aa).

The interval 24–44 is disordered; it reads RAKAYRSHRATGKTTKQKRQL.

The protein belongs to the bacterial ribosomal protein bL35 family.

In Mycoplasma mycoides subsp. mycoides SC (strain CCUG 32753 / NCTC 10114 / PG1), this protein is Large ribosomal subunit protein bL35.